Here is a 1436-residue protein sequence, read N- to C-terminus: Probable ATP-dependent RNA helicase spindle-E (1436 aa).

One can recognise a Helicase ATP-binding domain in the interval 124–291; that stretch reads LAAINANPVV…FTTTNSIPPV (168 aa). 137–144 contacts ATP; the sequence is GETGCGKT. Positions 237–240 match the DEAH box motif; the sequence is DEVH. Positions 337 to 524 constitute a Helicase C-terminal domain; sequence KIIMVIDNME…NSVLRAKELE (188 aa). One can recognise a Tudor domain in the interval 940 to 1003; the sequence is ACDISKGMMV…RFMSEELIQQ (64 aa).

Belongs to the DEAD box helicase family. DEAH subfamily.

It localises to the cytoplasm. It carries out the reaction ATP + H2O = ADP + phosphate + H(+). Probable ATP-binding RNA helicase which plays a central role during spermatogenesis and oogenesis by repressing transposable elements and preventing their mobilization, which is essential for the germline integrity. Acts via the piRNA metabolic process, which mediates the repression of transposable elements during meiosis by forming complexes composed of piRNAs and Piwi and govern the methylation and subsequent repression of transposons. Involved in the repression of LTR retrotransposon copia. Also involved in telomere regulation by repressing specialized telomeric retroelements HeT-A, TAHRE, and TART; Drosophila telomeres being maintained by transposition of specialized telomeric retroelements. Involved in telomeric trans-silencing, a repression mechanism by which a transposon or a transgene inserted in subtelomeric heterochromatin has the capacity to repress in trans in the female germline, a homologous transposon, or transgene located in euchromatin. Involved in the repression of testis-expressed Stellate genes by the homologous Su(Ste) repeats. Required for anteroposterior and dorsoventral axis formation during oogenesis. The chain is Probable ATP-dependent RNA helicase spindle-E (spn-E) from Drosophila yakuba (Fruit fly).